The chain runs to 360 residues: uncharacterized protein (360 aa).

Residues 4-235 (LSLQHIQKIY…PANMFVAGFI (232 aa)) enclose the ABC transporter domain. Position 37 to 44 (37 to 44 (GPSGCGKS)) interacts with ATP.

The protein belongs to the ABC transporter superfamily.

This is an uncharacterized protein from Escherichia coli O157:H7.